The following is a 398-amino-acid chain: MRIGIFSEAYLPLISGVVTSVVNLKEGLEALGHEVYVITPIPSKDKFENDPSVIRIPGWVIPRKSLKGFRLVLFVKRYVRKMRKLKLDVVHIHTEFSMGKLGLAVAKKERIPSVYTLHTSYQDYTHYVSKLLTRFAPNAAKKLAGKINNQYTKNCHMTIVPTKKIYDKMIRLKHDGEFTIIPSGINLKPFYKSSYTSEQVQALKDKLGIRNDEFVAILVARIAKEKSIGDLVEAFVEFYKSYPNSRFIIIGDGPDKPVLDKLIDSKKASKYINTLGFVKNAEVGLYYQIADVFLNASTTETQGLTYVEALAASLPIIVRYDDVFDAFVEDGKNGIFFNKNEELVKHLIHIRQNPEILGTLSKNAEISTKPYAKEVYAKSCETLYLDLIDKNNKKLNKK.

It belongs to the glycosyltransferase group 1 family. Glycosyltransferase 4 subfamily. The cofactor is Mg(2+).

The protein resides in the cell membrane. The enzyme catalyses a 1,2-diacyl-sn-glycerol + UDP-alpha-D-glucose = a 1,2-diacyl-3-O-(alpha-D-glucopyranosyl)-sn-glycerol + UDP + H(+). With respect to regulation, activated by the negatively charged lipids phosphatidylglycerol (PG), cardiolipin (CL), dodecylphosphate-rac-glycerol (PDG), 1,2-dioleoyl-phosphatidylglycerol (DOPG) and phosphatidylserine (PS). Glucosyltransferase involved in the biosynthesis of the non-bilayer-prone membrane lipid alpha-monoglucosyldiacylglycerol. This is a major component for maintaining a certain anionic lipid surface charge density, for balancing the bilayer to non-bilayer phase equilibria and for keeping a constant lipid bilayer spontaneous curvature (curvature packing stress). Catalyzes the transfer of a glucosyl residue from UDP-Glc to diacylglycerol (DAG) acceptor to form the corresponding alpha-glucosyl-DAG (1,2-diacyl-3-O-(alpha-D-glucopyranosyl)-sn-glycerol). It can only use UDP-Glc as sugar donor and DAG is the preferred substrate. The protein is Alpha-monoglucosyldiacylglycerol synthase (mgs) of Acholeplasma laidlawii.